The primary structure comprises 280 residues: Clathrin adapter accessory protein LAA2 (280 aa).

Positions 1–26 (MSDRDQIEPVTNALDAESDSSDDFGN) are disordered. Residues 19-30 (DSSDDFGNFSDA) carry the Ear-binding motif motif.

As to quaternary structure, interacts with the clathrin-associated adapter complex AP-1. Interacts with LAA1.

Its subcellular location is the cytoplasmic vesicle. The protein localises to the clathrin-coated vesicle. Its function is as follows. Involved in localization of clathrin-associated adapter complex (AP-1) and subsequent AP-1-mediated clathrin-coated vesicle cargo loading. Directly mediates the interaction between LAA1 and AP-1 which is required for AP-1 localization. In complex with LAA1, cooperates with the small GTPase ARF1 and the phosphatidyl-inositol-4-phosphate (PI4P) synthesis to confer temporal specificity to AP-1 recruitment. The polypeptide is Clathrin adapter accessory protein LAA2 (Saccharomyces cerevisiae (strain ATCC 204508 / S288c) (Baker's yeast)).